We begin with the raw amino-acid sequence, 91 residues long: MIKDNTVFVGNKPVMNYVLAVVTQFNNGAEEVAIKARGKAISRAVDTAEIALNRFLANVDKKEIFTSTEMIDTDTGKTNVSSIEIVLTHAK.

Belongs to the histone-like Alba family.

The protein localises to the cytoplasm. It localises to the chromosome. In terms of biological role, binds double-stranded DNA tightly but without sequence specificity. Involved in DNA compaction. This is DNA/RNA-binding protein Alba from Methanoculleus marisnigri (strain ATCC 35101 / DSM 1498 / JR1).